The chain runs to 464 residues: Leucine-rich repeat-containing protein 34 (464 aa).

Positions 1–48 (MAAQPPRPVGERSMGSSREAARAPARSPAWASTQASTPGAALAVQRES) are disordered. The segment covering 16-32 (SSREAARAPARSPAWAS) has biased composition (low complexity). LRR repeat units follow at residues 295-315 (SLRY…VYLA) and 323-345 (TLEV…LSET).

Interacts with NPM1 and NCL.

Its subcellular location is the nucleus. It is found in the nucleolus. The protein resides in the cytoplasm. Its function is as follows. Highly expressed in stem cells where it may be involved in regulation of pluripotency. In embryonic stem cells (ESCs), important for normal expression of the pluripotency regulators POU5F1/OCT4 and KLF4. Also important for expression of the ectodermal marker gene NES and the endodermal marker gene GATA4. Promotes stem cell proliferation in vitro. This chain is Leucine-rich repeat-containing protein 34 (LRRC34), found in Homo sapiens (Human).